Reading from the N-terminus, the 282-residue chain is Energy-coupling factor transporter ATP-binding protein EcfA1 (282 aa).

Residues 6–243 (ISFDHVTFTY…VEMLKRIGLD (238 aa)) form the ABC transporter domain. 40 to 47 (GHNGSGKS) contacts ATP.

Belongs to the ABC transporter superfamily. Energy-coupling factor EcfA family. As to quaternary structure, forms a stable energy-coupling factor (ECF) transporter complex composed of 2 membrane-embedded substrate-binding proteins (S component), 2 ATP-binding proteins (A component) and 2 transmembrane proteins (T component).

Its subcellular location is the cell membrane. In terms of biological role, ATP-binding (A) component of a common energy-coupling factor (ECF) ABC-transporter complex. Unlike classic ABC transporters this ECF transporter provides the energy necessary to transport a number of different substrates. The chain is Energy-coupling factor transporter ATP-binding protein EcfA1 from Lactobacillus delbrueckii subsp. bulgaricus (strain ATCC 11842 / DSM 20081 / BCRC 10696 / JCM 1002 / NBRC 13953 / NCIMB 11778 / NCTC 12712 / WDCM 00102 / Lb 14).